Consider the following 299-residue polypeptide: Non-structural protein V (299 aa).

Residues 137 to 160 (DGVEVWGGDEESENSDVDSGEPDP) are compositionally biased toward acidic residues. Disordered regions lie at residues 137 to 186 (DGVE…ETVE) and 205 to 229 (KAGKTLVVPPIPSQERPTASEKPIK). Zn(2+) contacts are provided by H232, C251, C255, C267, C269, C272, C276, and C279.

Belongs to the paramyxoviruses V protein family. Interacts with host IFIH1/MDA5 and DHX58/LGP2. Interacts with host TYK2; this interaction inhibits the type I interferon signaling pathway.

The protein resides in the host cytoplasm. Functionally, plays an essential role in the inhibition of host immune response. Prevents the establishment of cellular antiviral state by blocking interferon-alpha/beta (IFN-alpha/beta) production and signaling pathway. Interacts with host IFIH1/MDA5 and DHX58/LGP2 to inhibit the transduction pathway involved in the activation of IFN-beta promoter, thus protecting the virus against cell antiviral state. Blocks the type I interferon signaling pathway by interacting with host TYK2 and thereby inhibiting downstream STAT1 and STAT2 phosphorylation. In Rinderpest virus (strain Kabete O) (RDV), this protein is Non-structural protein V (P/V).